A 3953-amino-acid polypeptide reads, in one-letter code: Zinc finger protein 469 (3953 aa).

Disordered regions lie at residues 1 to 274 (MPGE…VSFQ), 313 to 465 (WPEE…MFFN), 512 to 672 (EWQG…FPFP), 763 to 784 (GHQR…RVPA), 869 to 1383 (ADEE…HSEL), 1400 to 1461 (PKPS…DLPV), 1575 to 1610 (LQRS…SQRR), 1703 to 1864 (SKTG…GASS), 1884 to 1947 (VSNT…TVEG), 1991 to 2030 (KTQG…TGPT), 2070 to 2700 (LTAA…TLGP), 2716 to 2915 (AGET…LSDS), 3001 to 3036 (EMPA…PGNT), and 3072 to 3110 (GPSF…PAKG). A compositionally biased stretch (polar residues) spans 187–198 (PPSSFTSTNYTS). Composition is skewed to pro residues over residues 202–211 (TPRPPAPGPP) and 324–335 (YPLPTQPAPSPL). Positions 603–623 (STCSSLSPMSSSPANPSSEES) are enriched in low complexity. 2 stretches are compositionally biased toward pro residues: residues 768–780 (PGPP…PAAP) and 896–911 (KAPP…PQTP). Positions 944 to 953 (QQRRGKQLKL) are enriched in basic residues. The segment covering 963–975 (AAEGSGSGGGGRA) has biased composition (gly residues). Residues 981 to 991 (RRNDGLGERPP) are compositionally biased toward basic and acidic residues. Residues 1005–1017 (RADPAPRVPRAAA) are compositionally biased toward low complexity. Basic residues-rich tracts occupy residues 1025 to 1042 (SRRR…RKAR) and 1058 to 1070 (KNRR…RRAG). Residues 1082–1093 (PGAEDRRLREYD) show a composition bias toward basic and acidic residues. The span at 1094 to 1103 (FASESEEDEQ) shows a compositional bias: acidic residues. The segment covering 1120 to 1137 (KRKEVELTQGPREDEPQK) has biased composition (basic and acidic residues). Positions 1158-1177 (PGGSRPGPGRSPQARGPSRS) are enriched in low complexity. Positions 1213–1229 (EETRPSLDFPQEAKEPE) are enriched in basic and acidic residues. Polar residues-rich tracts occupy residues 1278 to 1290 (PKPS…TAPH) and 1333 to 1350 (NPSS…SKIS). Residues 1577 to 1595 (RSKDTRGAPRELAEAESVG) show a composition bias toward basic and acidic residues. Composition is skewed to polar residues over residues 1991–2005 (KTQG…QPEN) and 2014–2024 (NHASVNASPKT). Over residues 2243–2262 (DTPKDSTLRIPEDSRKEKLW) the composition is skewed to basic and acidic residues. Residues 2409–2435 (TAPSSTASDFQSDSPQSHRNASHQTPQ) show a composition bias toward polar residues. Residues 2472–2498 (VTCEVCAASFRSGPGLSRHKARKHRPH) form a C2H2-type 1 zinc finger. Basic residues predominate over residues 2488–2498 (SRHKARKHRPH). Low complexity predominate over residues 2506-2521 (SPAALPAQQPLEPLAQ). Residues 2534 to 2546 (SGKERPNHSRGDP) show a composition bias toward basic and acidic residues. Over residues 2565–2574 (PGSPHSQQLH) the composition is skewed to low complexity. The segment covering 2592–2631 (PRPDQAREDELHPKQAEKREGRRWRREPTVDSPSHSEGKS) has biased composition (basic and acidic residues). Positions 2632 to 2642 (NKKRGKLRGRR) are enriched in basic residues. The segment covering 2664-2676 (PSPAMASYAASPS) has biased composition (low complexity). Basic and acidic residues predominate over residues 2777-2787 (DSSRAHSRSEE). The span at 2805-2816 (TSSSPADSTTSS) shows a compositional bias: low complexity. The segment covering 2869-2879 (LTRKRNPHVYG) has biased composition (basic residues). A compositionally biased stretch (low complexity) spans 3095–3105 (AAGAGRAQGRG). The C2H2-type 2 zinc finger occupies 3115–3137 (YKCKVCFQRFRSLGELDLHKLAH). The segment at 3232 to 3322 (TEPAPKHHRG…PDPWAGGEPL (91 aa)) is disordered. Residues 3260-3272 (GEAKKDSPGERAK) show a composition bias toward basic and acidic residues. A compositionally biased stretch (pro residues) spans 3302 to 3314 (PGPPRTTPSPSPD). C2H2-type zinc fingers lie at residues 3337-3359 (RDCH…LAVH) and 3365-3388 (YLCP…GGAH). A C2H2-type 5; degenerate zinc finger spans residues 3418–3442 (FACSSCNYTFAKKEQFDRHMNKHLR). 3 disordered regions span residues 3448–3501 (FAFR…PILS), 3518–3559 (STTK…SPFP), and 3576–3925 (ERPE…HRTA). Residues 3584–3602 (PGSPGPLLQQALPLGASLP) are compositionally biased toward low complexity. Over residues 3633 to 3651 (CAPDHFQEDHLLQKEKEVS) the composition is skewed to basic and acidic residues. Low complexity-rich tracts occupy residues 3728 to 3741 (PGPS…PRPG) and 3749 to 3759 (QPQPASGQLQS). 2 stretches are compositionally biased toward basic and acidic residues: residues 3876-3892 (EQRK…DRLG) and 3915-3925 (EPAEPHTHRTA).

Belongs to the krueppel C2H2-type zinc-finger protein family. Detected in cornea, sclera, skin fibroblasts and striated muscle.

It localises to the nucleus. In terms of biological role, may be involved in transcriptional regulation. The sequence is that of Zinc finger protein 469 (ZNF469) from Homo sapiens (Human).